Here is a 294-residue protein sequence, read N- to C-terminus: MEEVVAEELDDEEQLVRRHRKEKKELQAKIQGMKNAVPKNDKKRRKQLTEDVAKLEREMEQKHREELEQLKQLTFKDSKIDSVAVNISNLVLENQPPRISKAQKRREKKAALEKEREERIAEAEIENLSGARHLESEKLAQILAARELEIKQIPSDGHCMYGALEDQLREQDCALTVASLRRQTAEYMQTHSDDFLPFLTNPSTGDMYTPEEFGKYCDDIVNTAAWGGQLELRALSHILQTPIEILQADAPPIIVGEEYPRNPLVLVYMRHAYGLGEHYNSVTRLVNSATENCS.

Methionine 1 carries the post-translational modification N-acetylmethionine. One can recognise an OTU domain in the interval leucine 148 to leucine 285. The segment at isoleucine 153–cysteine 159 is cys-loop. Aspartate 156 is a catalytic residue. Catalysis depends on cysteine 159, which acts as the Nucleophile. Positions isoleucine 220–leucine 230 are variable-loop. The segment at tyrosine 268–histidine 278 is his-loop. The active site involves histidine 278.

In terms of assembly, interacts with the eukaryotic translation initiation factor 4F complex. As to expression, ubiquitously expressed. Expression is observed in several organ systems including the cardiovascular, digestive, central and peripheral nervous and musculoskeletal systems.

The catalysed reaction is Thiol-dependent hydrolysis of ester, thioester, amide, peptide and isopeptide bonds formed by the C-terminal Gly of ubiquitin (a 76-residue protein attached to proteins as an intracellular targeting signal).. In terms of biological role, deubiquitinating enzyme that may play a role in the ubiquitin-dependent regulation of protein synthesis, downstream of mTORC1. May associate with the protein synthesis initiation complex and modify its ubiquitination to repress translation. May also repress DNA synthesis and modify different cellular targets thereby regulating cell growth and proliferation. May also play a role in proteasome assembly and function. In Mus musculus (Mouse), this protein is Deubiquitinase OTUD6B.